A 285-amino-acid chain; its full sequence is Probable enoyl-CoA hydratase echA12 (285 aa).

It belongs to the enoyl-CoA hydratase/isomerase family.

It catalyses the reaction a (3S)-3-hydroxyacyl-CoA = a (2E)-enoyl-CoA + H2O. The enzyme catalyses a 4-saturated-(3S)-3-hydroxyacyl-CoA = a (3E)-enoyl-CoA + H2O. Could possibly oxidize fatty acids using specific components. This Mycobacterium bovis (strain ATCC BAA-935 / AF2122/97) protein is Probable enoyl-CoA hydratase echA12 (echA12).